A 200-amino-acid polypeptide reads, in one-letter code: Large ribosomal subunit protein uL18 (200 aa).

This sequence belongs to the universal ribosomal protein uL18 family. As to quaternary structure, part of the 50S ribosomal subunit. Contacts the 5S and 23S rRNAs.

In terms of biological role, this is one of the proteins that bind and probably mediate the attachment of the 5S RNA into the large ribosomal subunit, where it forms part of the central protuberance. The protein is Large ribosomal subunit protein uL18 of Thermococcus sibiricus (strain DSM 12597 / MM 739).